The sequence spans 391 residues: 3-ketoacyl-CoA thiolase (391 aa).

Cysteine 95 serves as the catalytic Acyl-thioester intermediate. Active-site proton acceptor residues include histidine 347 and cysteine 377.

It belongs to the thiolase-like superfamily. Thiolase family. In terms of assembly, heterotetramer of two alpha chains (FadB) and two beta chains (FadA).

It is found in the cytoplasm. The enzyme catalyses an acyl-CoA + acetyl-CoA = a 3-oxoacyl-CoA + CoA. Its pathway is lipid metabolism; fatty acid beta-oxidation. In terms of biological role, catalyzes the final step of fatty acid oxidation in which acetyl-CoA is released and the CoA ester of a fatty acid two carbons shorter is formed. This chain is 3-ketoacyl-CoA thiolase, found in Marinomonas sp. (strain MWYL1).